Reading from the N-terminus, the 695-residue chain is Electrogenic aspartate/glutamate antiporter Aralar, mitochondrial (695 aa).

The interval 1–310 (MPMHIPFPFN…DYSDLSNIAP (310 aa)) is N-terminal domain. Residues 2 to 345 (PMHIPFPFNW…FIQVLESSYR (344 aa)) are Mitochondrial intermembrane-facing. 4 consecutive EF-hand domains span residues 71-104 (FNDE…GLLC), 105-140 (TPDA…TELH), 142-175 (KIPF…LLHD), and 176-211 (FHEE…VKRH). Residues Asp-84, Ser-86, Asp-88, Leu-90, Glu-95, Asp-118, Asn-122, Thr-124, and Asp-129 each contribute to the Ca(2+) site. Asp-189, Thr-193, and Asp-200 together coordinate Ca(2+). Residues 311-327 (EHYTKHMTHRLAEIKAV) are linker loop domain. The segment at 336-627 (FIQVLESSYR…RLFYVDFGGT (292 aa)) is carrier domain. Solcar repeat units lie at residues 340–431 (LESS…VRDK), 439–523 (IPTW…TKAM), and 531–619 (NHPL…LQRL). A helical transmembrane segment spans residues 346–363 (FTLGSFAGAVGATVVYPI). Topologically, residues 364–405 (DLVKTRMQNQRAGSYIGEVAYRNSWDCFKKVVRHEGFMGLYR) are mitochondrial matrix. Residues 406–425 (GLLPQLMGVAPEKAIKLTVN) form a helical membrane-spanning segment. Topologically, residues 426 to 448 (DLVRDKLTDKKGNIPTWAEVLAG) are mitochondrial intermembrane. Residues 449-462 (GCAGASQVVFTNPL) form a helical membrane-spanning segment. Residues 463 to 497 (EIVKIRLQVAGEIASGSKIRAWSVVRELGLFGLYK) are Mitochondrial matrix-facing. Residues 498–517 (GARACLLRDVPFSAIYFPTY) form a helical membrane-spanning segment. Topologically, residues 518–536 (AHTKAMMADKDGYNHPLTL) are mitochondrial intermembrane. A helical transmembrane segment spans residues 537 to 554 (LAAGAIAGVPAASLVTPA). The Mitochondrial matrix portion of the chain corresponds to 555-593 (DVIKTRLQVVARSGQTTYTGVWDATKKIMAEEGPRAFWK). Residues 594-613 (GTAARVFRSSPQFGVTLVTY) traverse the membrane as a helical segment. The Mitochondrial intermembrane portion of the chain corresponds to 614 to 695 (ELLQRLFYVD…AASPSTATGS (82 aa)). The tract at residues 628-695 (QPKGSEAHKI…AASPSTATGS (68 aa)) is C-terminal domain.

This sequence belongs to the mitochondrial carrier (TC 2.A.29) family. Homodimer (via N-terminus). The cofactor is Ca(2+). Expressed throughout the body in both males and females, including in ovaries and testes. As to expression, specifically expressed in female ovaries. In terms of tissue distribution, expressed throughout the body in both males and females but absent from ovaries and testes.

The protein localises to the mitochondrion inner membrane. It catalyses the reaction L-aspartate(in) + L-glutamate(out) + H(+)(out) = L-aspartate(out) + L-glutamate(in) + H(+)(in). It carries out the reaction 3-sulfino-L-alanine(out) + L-glutamate(in) + H(+)(in) = 3-sulfino-L-alanine(in) + L-glutamate(out) + H(+)(out). The catalysed reaction is L-2-aminoadipate(in) + L-glutamate(out) + H(+)(out) = L-2-aminoadipate(out) + L-glutamate(in) + H(+)(in). The enzyme catalyses L-glutamine(in) + L-glutamate(out) + Na(+)(out) + H(+)(out) = L-glutamine(out) + L-glutamate(in) + Na(+)(in) + H(+)(in). With respect to regulation, activated by Ca(2+). Inhibited by p-chloromercuribenzoate, pyrocarbonate, mersalyl, tannic acid and N-ethylmaleimide. In terms of biological role, mitochondrial electrogenic aspartate/glutamate antiporter that favors efflux of aspartate and entry of glutamate and proton within the mitochondria as part of the malate-aspartate shuttle. Also mediates the exchange of L-cysteinesulfinate (3-sulfino-L-alanine) for L-glutamate. Necessary for gamma-aminobutyric acid (GABA) uptake in brain mitochondria in response to increased mitochondrial membrane polarization; does not possess detectable GABA transport activity but role may be indirect. Functionally, possesses transport activity towards L-aspartate, L-glutamate and L-cysteinesulfinate (3-sulfino-L-alanine). L-glutamine transport activity is undetectable. GABA transport activity is undetectable. Its function is as follows. Possesses transport activity towards L-aspartate, L-glutamate and L-cysteinesulfinate (3-sulfino-L-alanine). Has a wider substrate specificity range that includes L-2-aminoadipate and L-glutamine. GABA transport activity is undetectable. This Drosophila melanogaster (Fruit fly) protein is Electrogenic aspartate/glutamate antiporter Aralar, mitochondrial.